Consider the following 160-residue polypeptide: Glutathione peroxidase homolog BsaA (160 aa).

Cysteine 35 is a catalytic residue.

It belongs to the glutathione peroxidase family.

This is Glutathione peroxidase homolog BsaA (bsaA) from Bacillus subtilis (strain 168).